A 234-amino-acid chain; its full sequence is Leucyl/phenylalanyl-tRNA--protein transferase (234 aa).

This sequence belongs to the L/F-transferase family.

The protein resides in the cytoplasm. It carries out the reaction N-terminal L-lysyl-[protein] + L-leucyl-tRNA(Leu) = N-terminal L-leucyl-L-lysyl-[protein] + tRNA(Leu) + H(+). The catalysed reaction is N-terminal L-arginyl-[protein] + L-leucyl-tRNA(Leu) = N-terminal L-leucyl-L-arginyl-[protein] + tRNA(Leu) + H(+). The enzyme catalyses L-phenylalanyl-tRNA(Phe) + an N-terminal L-alpha-aminoacyl-[protein] = an N-terminal L-phenylalanyl-L-alpha-aminoacyl-[protein] + tRNA(Phe). Functions in the N-end rule pathway of protein degradation where it conjugates Leu, Phe and, less efficiently, Met from aminoacyl-tRNAs to the N-termini of proteins containing an N-terminal arginine or lysine. This Shigella boydii serotype 18 (strain CDC 3083-94 / BS512) protein is Leucyl/phenylalanyl-tRNA--protein transferase.